A 618-amino-acid polypeptide reads, in one-letter code: DNA mismatch repair protein MutL (618 aa).

A disordered region spans residues 371–401; sequence AREPATPRYSGGASGGSGGRQSVGGWSHAQP. Positions 382-392 are enriched in gly residues; the sequence is GASGGSGGRQS.

The protein belongs to the DNA mismatch repair MutL/HexB family.

This protein is involved in the repair of mismatches in DNA. It is required for dam-dependent methyl-directed DNA mismatch repair. May act as a 'molecular matchmaker', a protein that promotes the formation of a stable complex between two or more DNA-binding proteins in an ATP-dependent manner without itself being part of a final effector complex. The protein is DNA mismatch repair protein MutL of Salmonella arizonae (strain ATCC BAA-731 / CDC346-86 / RSK2980).